We begin with the raw amino-acid sequence, 433 residues long: Trigger factor (433 aa).

The region spanning 163–248 (GDTVNIDFSG…VNEIKFKDVP (86 aa)) is the PPIase FKBP-type domain.

The protein belongs to the FKBP-type PPIase family. Tig subfamily.

It is found in the cytoplasm. The enzyme catalyses [protein]-peptidylproline (omega=180) = [protein]-peptidylproline (omega=0). In terms of biological role, involved in protein export. Acts as a chaperone by maintaining the newly synthesized protein in an open conformation. Functions as a peptidyl-prolyl cis-trans isomerase. This chain is Trigger factor, found in Staphylococcus epidermidis (strain ATCC 35984 / DSM 28319 / BCRC 17069 / CCUG 31568 / BM 3577 / RP62A).